Here is a 377-residue protein sequence, read N- to C-terminus: Membrane progestin receptor epsilon (377 aa).

A disordered region spans residues 1-40 (MPRRLQPRGAGTKGPPAPAPAASGAARNSHSAASRDPPAS). Residues 1–86 (MPRRLQPRGA…VLKPTNETLN (86 aa)) are Cytoplasmic-facing. Positions 9–26 (GAGTKGPPAPAPAASGAA) are enriched in low complexity. The helical transmembrane segment at 87–107 (FWTHFIPLLLFLSKFCRLFFL) threads the bilayer. Over 108–116 (SGGDVPFHH) the chain is Extracellular. Residues 117–137 (PWLLPLWCYASGVLLTFAMSC) form a helical membrane-spanning segment. Over 138–162 (TAHVFSCLSLRLRAAFFYLDYASIS) the chain is Cytoplasmic. The helical transmembrane segment at 163 to 183 (YYGFGSTVAYYYYLLPGLSLL) threads the bilayer. Topologically, residues 184-205 (DARVMTPYLQQRLGWHVDCTRL) are extracellular. The chain crosses the membrane as a helical span at residues 206–226 (IAAYRALVLPVAFVLAVACTV). Topologically, residues 227–243 (ACCKSRTDWCTYPFALR) are cytoplasmic. The chain crosses the membrane as a helical span at residues 244 to 264 (TFVFVMPLSMACPIMLESWLF). At 265 to 301 (DLRGENPTLFVHFYRRYFWLVVAAFFNVSKIPERIQP) the chain is on the extracellular side. The helical transmembrane segment at 302 to 322 (GLFDIIGHSHQLFHIFTFLSI) threads the bilayer. Residues 323–343 (YDQVYYVEEGLRQFLQAPPAA) lie on the Cytoplasmic side of the membrane. Residues 344-364 (PTFSGTVGYMLLLVVCLGLVI) form a helical membrane-spanning segment. Residues 365–377 (RKFLNSSEFCSKK) lie on the Extracellular side of the membrane.

The protein belongs to the ADIPOR family. As to quaternary structure, homodimer. In terms of tissue distribution, expression levels vary widely in a range of tissues. Expressed in the brain, at high level in the pituitary gland and also in hypothalamus, limbic system, caudate nucleus accumens, pons and olfactory bulb.

The protein localises to the cell membrane. Its function is as follows. Plasma membrane progesterone (P4) receptor coupled to G proteins. Seems to act through a G(s) mediated pathway. May be involved in regulating rapid P4 signaling in the nervous system. Also binds dehydroepiandrosterone (DHEA), pregnanolone, pregnenolone and allopregnanolone. The chain is Membrane progestin receptor epsilon from Homo sapiens (Human).